Here is a 542-residue protein sequence, read N- to C-terminus: Protein lin-9 homolog (542 aa).

An N-acetylalanine modification is found at alanine 2. Positions 2–296 are sufficient for interaction with RB1; sequence AELDQLPDES…QKQRPSRFFM (295 aa). A Glycyl lysine isopeptide (Lys-Gly) (interchain with G-Cter in SUMO2) cross-link involves residue lysine 21. Serine 65 and serine 95 each carry phosphoserine. Residues threonine 96 and threonine 304 each carry the phosphothreonine modification. Residues serine 309 and serine 321 each carry the phosphoserine modification. Positions 355 to 413 form a coiled coil; sequence IKKEHIKKLREMNTDAEKLKSYSMPISIEFQRRYATIVLELEQLNKDLNKVLHKVQQYC.

This sequence belongs to the lin-9 family. Component of the DREAM complex (also named LINC complex) at least composed of E2F4, E2F5, LIN9, LIN37, LIN52, LIN54, MYBL1, MYBL2, RBL1, RBL2, RBBP4, TFDP1 and TFDP2. The complex exists in quiescent cells where it represses cell cycle-dependent genes. It dissociates in S phase when LIN9, LIN37, LIN52 and LIN54 form a subcomplex that binds to MYBL2. Interacts with RB1.

It localises to the nucleus. It is found in the nucleoplasm. Functionally, acts as a tumor suppressor. Inhibits DNA synthesis. Its ability to inhibit oncogenic transformation is mediated through its association with RB1. Plays a role in the expression of genes required for the G1/S transition. The chain is Protein lin-9 homolog (LIN9) from Macaca fascicularis (Crab-eating macaque).